The primary structure comprises 116 residues: Iron-sulfur cluster insertion protein ErpA (116 aa).

Iron-sulfur cluster-binding residues include cysteine 44, cysteine 108, and cysteine 110.

Belongs to the HesB/IscA family. As to quaternary structure, homodimer. Iron-sulfur cluster is required as a cofactor.

Required for insertion of 4Fe-4S clusters for at least IspG. This is Iron-sulfur cluster insertion protein ErpA from Nitrosococcus oceani (strain ATCC 19707 / BCRC 17464 / JCM 30415 / NCIMB 11848 / C-107).